The chain runs to 454 residues: Glycosyl hydrolase family 109 protein (454 aa).

The segment at residues 1–29 (MFAMKRREFIAASAAVAASSLLPQTPAWA) is a signal peptide (tat-type signal). NAD(+) contacts are provided by residues 43 to 44 (MR), Asp-65, 116 to 119 (WEYH), 136 to 137 (EV), and Asn-165. Substrate is bound at residue Tyr-194. 224-228 (SEARW) contributes to the NAD(+) binding site. Substrate is bound by residues Arg-229, 241 to 244 (YPSH), and Tyr-324. Tyr-241 lines the NAD(+) pocket.

It belongs to the Gfo/Idh/MocA family. Glycosyl hydrolase 109 subfamily. NAD(+) serves as cofactor. Predicted to be exported by the Tat system. The position of the signal peptide cleavage has not been experimentally proven.

Functionally, glycosidase. This Stenotrophomonas maltophilia (strain K279a) protein is Glycosyl hydrolase family 109 protein.